We begin with the raw amino-acid sequence, 374 residues long: Eukaryotic translation initiation factor 3 subunit M (374 aa).

The residue at position 2 (S2) is an N-acetylserine. S2 and S152 each carry phosphoserine. Residues 180–339 (AASKVMVELL…RKVVVSHSTH (160 aa)) form the PCI domain. An N6-acetyllysine modification is found at K254. S367 is modified (phosphoserine).

The protein belongs to the eIF-3 subunit M family. As to quaternary structure, component of the eukaryotic translation initiation factor 3 (eIF-3) complex, which is composed of 13 subunits: EIF3A, EIF3B, EIF3C, EIF3D, EIF3E, EIF3F, EIF3G, EIF3H, EIF3I, EIF3J, EIF3K, EIF3L and EIF3M. The eIF-3 complex appears to include 3 stable modules: module A is composed of EIF3A, EIF3B, EIF3G and EIF3I; module B is composed of EIF3F, EIF3H, and EIF3M; and module C is composed of EIF3C, EIF3D, EIF3E, EIF3K and EIF3L. EIF3C of module C binds EIF3B of module A and EIF3H of module B, thereby linking the three modules. EIF3J is a labile subunit that binds to the eIF-3 complex via EIF3B. The eIF-3 complex interacts with RPS6KB1 under conditions of nutrient depletion. Mitogenic stimulation leads to binding and activation of a complex composed of MTOR and RPTOR, leading to phosphorylation and release of RPS6KB1 and binding of EIF4B to eIF-3.

It localises to the cytoplasm. Functionally, component of the eukaryotic translation initiation factor 3 (eIF-3) complex, which is required for several steps in the initiation of protein synthesis. The eIF-3 complex associates with the 40S ribosome and facilitates the recruitment of eIF-1, eIF-1A, eIF-2:GTP:methionyl-tRNAi and eIF-5 to form the 43S pre-initiation complex (43S PIC). The eIF-3 complex stimulates mRNA recruitment to the 43S PIC and scanning of the mRNA for AUG recognition. The eIF-3 complex is also required for disassembly and recycling of post-termination ribosomal complexes and subsequently prevents premature joining of the 40S and 60S ribosomal subunits prior to initiation. The eIF-3 complex specifically targets and initiates translation of a subset of mRNAs involved in cell proliferation, including cell cycling, differentiation and apoptosis, and uses different modes of RNA stem-loop binding to exert either translational activation or repression. This is Eukaryotic translation initiation factor 3 subunit M from Pongo abelii (Sumatran orangutan).